Here is a 185-residue protein sequence, read N- to C-terminus: Ribosome-recycling factor (185 aa).

Belongs to the RRF family.

It is found in the cytoplasm. Functionally, responsible for the release of ribosomes from messenger RNA at the termination of protein biosynthesis. May increase the efficiency of translation by recycling ribosomes from one round of translation to another. The chain is Ribosome-recycling factor from Coxiella burnetii (strain RSA 493 / Nine Mile phase I).